A 57-amino-acid chain; its full sequence is High-potential iron-sulfur protein (57 aa).

[4Fe-4S] cluster contacts are provided by Cys-21, Cys-24, Cys-33, and Cys-46.

The protein belongs to the high-potential iron-sulfur protein (HiPIP) family. As to quaternary structure, homodimer.

Functionally, specific class of high-redox-potential 4Fe-4S ferredoxins. Functions in anaerobic electron transport in most purple and in some other photosynthetic bacteria and in at least one genus (Paracoccus) of halophilic, denitrifying bacteria. The sequence is that of High-potential iron-sulfur protein (hip) from Rhodopila globiformis (Rhodopseudomonas globiformis).